We begin with the raw amino-acid sequence, 513 residues long: ATP synthase subunit alpha (513 aa).

Position 169–176 (169–176 (GDRQTGKS)) interacts with ATP.

It belongs to the ATPase alpha/beta chains family. In terms of assembly, F-type ATPases have 2 components, CF(1) - the catalytic core - and CF(0) - the membrane proton channel. CF(1) has five subunits: alpha(3), beta(3), gamma(1), delta(1), epsilon(1). CF(0) has three main subunits: a(1), b(2) and c(9-12). The alpha and beta chains form an alternating ring which encloses part of the gamma chain. CF(1) is attached to CF(0) by a central stalk formed by the gamma and epsilon chains, while a peripheral stalk is formed by the delta and b chains.

It is found in the cell membrane. The enzyme catalyses ATP + H2O + 4 H(+)(in) = ADP + phosphate + 5 H(+)(out). Functionally, produces ATP from ADP in the presence of a proton gradient across the membrane. The alpha chain is a regulatory subunit. The protein is ATP synthase subunit alpha of Baumannia cicadellinicola subsp. Homalodisca coagulata.